The sequence spans 168 residues: MTSLNTNVEHRRTRTTISQIIHDMTPENKFYITVADGGSKRFRNKPNDQSRHSGQYQPRNLSGKTNISTQSQFTPRLYGKQYNYNQPNRLQTRSVRPNYYSGYRYNNRTGNQEFYPMQPFNNQSFNNQSRTHQSKTYQHNQQKRSFNGPRNNGPQNNVPRFFQREETN.

Disordered regions lie at residues 37–74 (GGSK…SQFT), 81–100 (QYNY…PNYY), and 117–168 (MQPF…EETN). Polar residues-rich tracts occupy residues 52 to 74 (HSGQ…SQFT) and 82 to 95 (YNYN…TRSV). Low complexity predominate over residues 120–129 (FNNQSFNNQS). Polar residues predominate over residues 130 to 158 (RTHQSKTYQHNQQKRSFNGPRNNGPQNNV).

This is an uncharacterized protein from Acanthamoeba polyphaga (Amoeba).